Here is a 206-residue protein sequence, read N- to C-terminus: Small ribosomal subunit protein uS4 (206 aa).

The 64-residue stretch at 94 to 157 folds into the S4 RNA-binding domain; the sequence is RRLDNVVYRL…RSRTYFKNLV (64 aa).

The protein belongs to the universal ribosomal protein uS4 family. Part of the 30S ribosomal subunit. Contacts protein S5. The interaction surface between S4 and S5 is involved in control of translational fidelity.

Functionally, one of the primary rRNA binding proteins, it binds directly to 16S rRNA where it nucleates assembly of the body of the 30S subunit. In terms of biological role, with S5 and S12 plays an important role in translational accuracy. The sequence is that of Small ribosomal subunit protein uS4 from Chloroflexus aurantiacus (strain ATCC 29364 / DSM 637 / Y-400-fl).